Here is a 212-residue protein sequence, read N- to C-terminus: Ribosomal RNA small subunit methyltransferase G (212 aa).

Residues Gly-73, 127–128, and Arg-143 contribute to the S-adenosyl-L-methionine site; that span reads IE.

Belongs to the methyltransferase superfamily. RNA methyltransferase RsmG family.

It is found in the cytoplasm. It carries out the reaction guanosine(527) in 16S rRNA + S-adenosyl-L-methionine = N(7)-methylguanosine(527) in 16S rRNA + S-adenosyl-L-homocysteine. Functionally, specifically methylates the N7 position of guanine in position 527 of 16S rRNA. In Methylobacterium sp. (strain 4-46), this protein is Ribosomal RNA small subunit methyltransferase G.